The sequence spans 34 residues: Beta/mu-theraphotoxin-Pe1b (34 aa).

Intrachain disulfides connect C2-C16, C9-C21, and C15-C28.

The protein belongs to the neurotoxin 10 (Hwtx-1) family. 54 (ProTx-1) subfamily. As to expression, expressed by the venom gland.

The protein localises to the secreted. In terms of biological role, ion channel impairing toxin that inhibits several voltage-gated sodium channels. It acts by inhibiting the inward component of the sodium current and by shifting the voltage dependence of channel activation to more depolarized potentials. Its most potent activity is on Nav1.7/SCN9A (IC(50)=167 nM), followed by Nav1.6/SCN8A (IC(50)=696 nM), and Nav1.2/SCN2A (IC(50)=3.54 uM). The chain is Beta/mu-theraphotoxin-Pe1b from Phormingochilus everetti (Malaysian purple earth tiger tarantula).